We begin with the raw amino-acid sequence, 72 residues long: Long neurotoxin OH-17 (72 aa).

Disulfide bonds link Cys-3–Cys-21, Cys-14–Cys-42, Cys-27–Cys-31, Cys-46–Cys-57, and Cys-58–Cys-63.

The protein belongs to the three-finger toxin family. Long-chain subfamily. Type II alpha-neurotoxin sub-subfamily. As to expression, expressed by the venom gland.

It is found in the secreted. Functionally, binds with high affinity to muscular (alpha-1/CHRNA1) and neuronal (alpha-7/CHRNA7) nicotinic acetylcholine receptor (nAChR) and inhibits acetylcholine from binding to the receptor, thereby impairing neuromuscular and neuronal transmission. This Ophiophagus hannah (King cobra) protein is Long neurotoxin OH-17.